Consider the following 162-residue polypeptide: NADH-quinone oxidoreductase subunit I 1 (162 aa).

4Fe-4S ferredoxin-type domains lie at 52–82 (LRRY…IEAG) and 93–122 (VRYD…EGPN). [4Fe-4S] cluster contacts are provided by cysteine 62, cysteine 65, cysteine 68, cysteine 72, cysteine 102, cysteine 105, cysteine 108, and cysteine 112.

The protein belongs to the complex I 23 kDa subunit family. NDH-1 is composed of 14 different subunits. Subunits NuoA, H, J, K, L, M, N constitute the membrane sector of the complex. It depends on [4Fe-4S] cluster as a cofactor.

The protein resides in the cell inner membrane. The enzyme catalyses a quinone + NADH + 5 H(+)(in) = a quinol + NAD(+) + 4 H(+)(out). In terms of biological role, NDH-1 shuttles electrons from NADH, via FMN and iron-sulfur (Fe-S) centers, to quinones in the respiratory chain. The immediate electron acceptor for the enzyme in this species is believed to be ubiquinone. Couples the redox reaction to proton translocation (for every two electrons transferred, four hydrogen ions are translocated across the cytoplasmic membrane), and thus conserves the redox energy in a proton gradient. This Rhodopseudomonas palustris (strain ATCC BAA-98 / CGA009) protein is NADH-quinone oxidoreductase subunit I 1.